Here is a 275-residue protein sequence, read N- to C-terminus: Elongation factor Ts (275 aa).

The tract at residues 76–79 (TDFV) is involved in Mg(2+) ion dislocation from EF-Tu.

The protein belongs to the EF-Ts family.

The protein localises to the cytoplasm. Functionally, associates with the EF-Tu.GDP complex and induces the exchange of GDP to GTP. It remains bound to the aminoacyl-tRNA.EF-Tu.GTP complex up to the GTP hydrolysis stage on the ribosome. The chain is Elongation factor Ts from Rhodococcus jostii (strain RHA1).